A 137-amino-acid polypeptide reads, in one-letter code: Large-conductance mechanosensitive channel (137 aa).

4 helical membrane passes run 9-29, 32-52, 54-74, and 79-99; these read AFAVKGNVVDMAVGIIIGAAF, IVSSFVGDVVMPPIGLLIGGV, FGDLAVTLKAAAGDTPAVVLA, and IQSIIDFVIIAFAIFMGVKVI.

The protein belongs to the MscL family. In terms of assembly, homopentamer.

The protein resides in the cell inner membrane. In terms of biological role, channel that opens in response to stretch forces in the membrane lipid bilayer. May participate in the regulation of osmotic pressure changes within the cell. In Pseudomonas fluorescens (strain ATCC BAA-477 / NRRL B-23932 / Pf-5), this protein is Large-conductance mechanosensitive channel.